The chain runs to 102 residues: Aspartyl/glutamyl-tRNA(Asn/Gln) amidotransferase subunit C (102 aa).

Belongs to the GatC family. As to quaternary structure, heterotrimer of A, B and C subunits.

The catalysed reaction is L-glutamyl-tRNA(Gln) + L-glutamine + ATP + H2O = L-glutaminyl-tRNA(Gln) + L-glutamate + ADP + phosphate + H(+). The enzyme catalyses L-aspartyl-tRNA(Asn) + L-glutamine + ATP + H2O = L-asparaginyl-tRNA(Asn) + L-glutamate + ADP + phosphate + 2 H(+). In terms of biological role, allows the formation of correctly charged Asn-tRNA(Asn) or Gln-tRNA(Gln) through the transamidation of misacylated Asp-tRNA(Asn) or Glu-tRNA(Gln) in organisms which lack either or both of asparaginyl-tRNA or glutaminyl-tRNA synthetases. The reaction takes place in the presence of glutamine and ATP through an activated phospho-Asp-tRNA(Asn) or phospho-Glu-tRNA(Gln). The protein is Aspartyl/glutamyl-tRNA(Asn/Gln) amidotransferase subunit C of Bordetella pertussis (strain Tohama I / ATCC BAA-589 / NCTC 13251).